We begin with the raw amino-acid sequence, 356 residues long: sn-glycerol-3-phosphate import ATP-binding protein UgpC (356 aa).

An ABC transporter domain is found at 4-235 (LKLQAVTKSW…PASLFVASFI (232 aa)). An ATP-binding site is contributed by 37 to 44 (GPSGCGKS).

It belongs to the ABC transporter superfamily. sn-glycerol-3-phosphate importer (TC 3.A.1.1.3) family. As to quaternary structure, the complex is composed of two ATP-binding proteins (UgpC), two transmembrane proteins (UgpA and UgpE) and a solute-binding protein (UgpB).

The protein resides in the cell inner membrane. It carries out the reaction sn-glycerol 3-phosphate(out) + ATP + H2O = sn-glycerol 3-phosphate(in) + ADP + phosphate + H(+). Its function is as follows. Part of the ABC transporter complex UgpBAEC involved in sn-glycerol-3-phosphate (G3P) import. Responsible for energy coupling to the transport system. The polypeptide is sn-glycerol-3-phosphate import ATP-binding protein UgpC (Escherichia coli (strain UTI89 / UPEC)).